Reading from the N-terminus, the 119-residue chain is UPF0102 protein Athe_0977 (119 aa).

The protein belongs to the UPF0102 family.

The sequence is that of UPF0102 protein Athe_0977 from Caldicellulosiruptor bescii (strain ATCC BAA-1888 / DSM 6725 / KCTC 15123 / Z-1320) (Anaerocellum thermophilum).